The primary structure comprises 308 residues: Porphobilinogen deaminase (308 aa).

Position 241 is an S-(dipyrrolylmethanemethyl)cysteine (Cys241).

This sequence belongs to the HMBS family. Monomer. It depends on dipyrromethane as a cofactor.

The enzyme catalyses 4 porphobilinogen + H2O = hydroxymethylbilane + 4 NH4(+). The protein operates within porphyrin-containing compound metabolism; protoporphyrin-IX biosynthesis; coproporphyrinogen-III from 5-aminolevulinate: step 2/4. Tetrapolymerization of the monopyrrole PBG into the hydroxymethylbilane pre-uroporphyrinogen in several discrete steps. In Staphylococcus aureus (strain Mu50 / ATCC 700699), this protein is Porphobilinogen deaminase.